The following is an 871-amino-acid chain: Translation initiation factor IF-2 (871 aa).

The interval M1–Q242 is disordered. Residues P68 to A91 show a composition bias toward low complexity. Basic and acidic residues predominate over residues A115 to R174. Composition is skewed to low complexity over residues K182–A206 and A225–K241. Residues P367–K538 form the tr-type G domain. The interval G376–T383 is G1. GTP is bound at residue G376–T383. The G2 stretch occupies residues G401–H405. The interval D424 to G427 is G3. Residues D424–H428 and N478–D481 contribute to the GTP site. A G4 region spans residues N478–D481. Residues S514 to K516 are G5.

This sequence belongs to the TRAFAC class translation factor GTPase superfamily. Classic translation factor GTPase family. IF-2 subfamily.

It is found in the cytoplasm. One of the essential components for the initiation of protein synthesis. Protects formylmethionyl-tRNA from spontaneous hydrolysis and promotes its binding to the 30S ribosomal subunits. Also involved in the hydrolysis of GTP during the formation of the 70S ribosomal complex. In Nitrobacter winogradskyi (strain ATCC 25391 / DSM 10237 / CIP 104748 / NCIMB 11846 / Nb-255), this protein is Translation initiation factor IF-2.